The primary structure comprises 674 residues: Primary amine oxidase (674 aa).

Residues 1–25 (MASTTTMRLALFSVLTLLSFHAVVS) form the signal peptide. Residue Asn156 is glycosylated (N-linked (GlcNAc...) asparagine). A disulfide bridge connects residues Cys162 and Cys183. The span at 226-236 (ENTEYQVSKQS) shows a compositional bias: polar residues. The interval 226–251 (ENTEYQVSKQSPPFGPKQHSLTSHQP) is disordered. 323–334 (FFDSGEFGFGLS) is a binding site for substrate. Residue Asp325 is the Proton acceptor of the active site. The cysteines at positions 344 and 370 are disulfide-linked. Asn389 is a glycosylation site (N-linked (GlcNAc...) asparagine). Residue 409–414 (VGNYDN) participates in substrate binding. The active-site Schiff-base intermediate with substrate; via topaquinone is Tyr412. 2',4',5'-topaquinone is present on Tyr412. His467 and His469 together coordinate Cu cation. 5 residues coordinate Mn(2+): Asp476, Phe477, Asp478, Asp617, and Ile618. His628 serves as a coordination point for Cu cation.

The protein belongs to the copper/topaquinone oxidase family. In terms of assembly, homodimer. Requires Cu cation as cofactor. It depends on Mn(2+) as a cofactor. L-topaquinone is required as a cofactor. Post-translationally, topaquinone (TPQ) is generated by copper-dependent autoxidation of a specific tyrosyl residue.

It catalyses the reaction a primary methyl amine + O2 + H2O = an aldehyde + H2O2 + NH4(+). The polypeptide is Primary amine oxidase (Pisum sativum (Garden pea)).